We begin with the raw amino-acid sequence, 159 residues long: Protein-export protein SecB (159 aa).

It belongs to the SecB family. Homotetramer, a dimer of dimers. One homotetramer interacts with 1 SecA dimer.

The protein resides in the cytoplasm. Its function is as follows. One of the proteins required for the normal export of preproteins out of the cell cytoplasm. It is a molecular chaperone that binds to a subset of precursor proteins, maintaining them in a translocation-competent state. It also specifically binds to its receptor SecA. In Burkholderia vietnamiensis (strain G4 / LMG 22486) (Burkholderia cepacia (strain R1808)), this protein is Protein-export protein SecB.